We begin with the raw amino-acid sequence, 898 residues long: MSRFFHAKEDSDSDTSSSEDEVEDQKVNKSAKFRDDLDFMAGPEEDEKRVVRAQKDKKFDELKGIIKQNRDAKSNKDLNRLLTGFDSLAKAYDKSKTVFQRQNVANPRFYIRSLVEIEDYVNKLWDDKDAKSALSKNNAKALPPLRQKLKKYIKDQQLQDLVTDYRVNPDEDGYETPEDEDDDDFGEVSESKAEKSPGKPSEKAAVSDSDSDSDDDDSSNWSSEPESNSSDDEDSVTKMEQLRRYFLKKEFRVESKDDKKEKKKRVIRVKEAVEEDDDADWTPVNREKSVVHFDPKEEVTHDVMIKKLNEVMSARGKRTTDRNQHVANLRKLLEVSEEKELGLGINVKISFCIISALFELNAKISDHMEYETFMTTLQTVNSLLDLLIGTDRVKLSVTYAEEDENLKDDTQEYRIQGSILIAVQRLDGELAKILQNADCHSNDYIEKLKAEKDMCSLIEKAEKYVELRNDSGIFDKHEVCKVYMMRIEHAYYKYQDQNEEDAGKLMDYLCNKIYTLDDEKRLRQRAMLCHVYYLAVHDKWHRARDLLLMSHMQAIVDHSDVDTQILYNRTICQLGLCAFRHGFIREAHQGLSEIQNTQRAKELLAQAVGTRQHEKTAEQEKIDRSRQVPYHMHINVELMECVYLICSMLLEIPHMASCEFEMRRRMLSRSFHYQLKQSEKASLTGPPENTREHVVAASKAMLNGDWKKCQDYIVNDKMNQKVWNLFHNAETVKGMVVRRIQEESLRTYLLTYSTVYATVSLKKLADLFELSKKDVHSIISKMIIQEELSATLDEPTDCLIMHRVEPSRLQMLALNLSDKLQTLAENNEQILEPRTGRGGYQGPGSWFPGRNERQGDKQKGSGGYQGERRGGQGQDGKRGNWGSQGGQQRRHPQKPRAF.

Residues 1-10 (MSRFFHAKED) show a composition bias toward basic and acidic residues. 2 disordered regions span residues 1 to 38 (MSRFFHAKEDSDSDTSSSEDEVEDQKVNKSAKFRDDLD) and 162 to 238 (VTDY…SVTK). Positions 11 to 23 (SDSDTSSSEDEVE) are enriched in acidic residues. Over residues 24 to 37 (DQKVNKSAKFRDDL) the composition is skewed to basic and acidic residues. Residues 170–187 (DEDGYETPEDEDDDDFGE) show a composition bias toward acidic residues. Positions 189-202 (SESKAEKSPGKPSE) are enriched in basic and acidic residues. Positions 209–218 (SDSDSDDDDS) are enriched in acidic residues. The span at 219–228 (SNWSSEPESN) shows a compositional bias: low complexity. Residues 630–806 (YHMHINVELM…DCLIMHRVEP (177 aa)) enclose the PCI domain. Residues 829 to 898 (QILEPRTGRG…RRHPQKPRAF (70 aa)) form a disordered region. Basic and acidic residues-rich tracts occupy residues 850–859 (RNERQGDKQK) and 866–878 (GERRGGQGQDGKR). The segment covering 888-898 (QRRHPQKPRAF) has biased composition (basic residues).

The protein belongs to the eIF-3 subunit C family. As to quaternary structure, component of the eukaryotic translation initiation factor 3 (eIF-3) complex.

Its subcellular location is the cytoplasm. Component of the eukaryotic translation initiation factor 3 (eIF-3) complex, which is involved in protein synthesis of a specialized repertoire of mRNAs and, together with other initiation factors, stimulates binding of mRNA and methionyl-tRNAi to the 40S ribosome. The eIF-3 complex specifically targets and initiates translation of a subset of mRNAs involved in cell proliferation. This chain is Eukaryotic translation initiation factor 3 subunit C, found in Caenorhabditis elegans.